A 499-amino-acid chain; its full sequence is Tetrathionate hydrolase (499 aa).

A signal peptide spans 1–32 (MPSIVRNHGPHNKILLSALLLALFGWVPLASA).

It belongs to the tetrathionate hydrolase family. In terms of assembly, homodimer.

It is found in the cell membrane. The enzyme catalyses tetrathionate + H2O = sulfur + thiosulfate + sulfate + H(+). In terms of biological role, catalyzes the hydrolysis of tetrathionate to generate elemental sulfur, thiosulfate and sulfate. In Acidithiobacillus ferrooxidans (strain ATCC 23270 / DSM 14882 / CIP 104768 / NCIMB 8455) (Ferrobacillus ferrooxidans (strain ATCC 23270)), this protein is Tetrathionate hydrolase.